A 168-amino-acid chain; its full sequence is Protein yop-1 (168 aa).

The Cytoplasmic portion of the chain corresponds to 1 to 35 (MSSPQDRAQQYIGQLDKELSKYPTLNNLEKTTGVP). The chain crosses the membrane as a helical span at residues 36–55 (KAYAVIGLVALYFFLIIFNL). A topological domain (lumenal) is located at residue G56. A helical membrane pass occupies residues 57-76 (GQLLTNLAGFVLPGYYSLNA). Residues 77 to 86 (LFTASKQDDT) lie on the Cytoplasmic side of the membrane. A helical transmembrane segment spans residues 87–103 (QWLTYWVVFSLFTVIES). Topologically, residues 104-105 (LI) are lumenal. Residues 106–124 (SVVYWFPFYFTFKFVFLLW) form a helical membrane-spanning segment. At 125-168 (LSLPTFKGAETIFRSFLAPTLGRYFQNGSTASGLRAKADAVHTD) the chain is on the cytoplasmic side.

This sequence belongs to the DP1 family. Oligomer.

The protein localises to the endoplasmic reticulum membrane. The protein resides in the golgi apparatus membrane. In terms of biological role, required to generate and maintain the structure of the tubular endoplasmic reticulum network and the vacuole. Induces high curvature in membranes and causes membrane tubule formation. Involved in membrane/vesicle trafficking. The polypeptide is Protein yop-1 (yop-1) (Neurospora crassa (strain ATCC 24698 / 74-OR23-1A / CBS 708.71 / DSM 1257 / FGSC 987)).